The sequence spans 286 residues: Bifunctional protein FolD (286 aa).

NADP(+) contacts are provided by residues 167-169 and I233; that span reads GRS.

This sequence belongs to the tetrahydrofolate dehydrogenase/cyclohydrolase family. In terms of assembly, homodimer.

The catalysed reaction is (6R)-5,10-methylene-5,6,7,8-tetrahydrofolate + NADP(+) = (6R)-5,10-methenyltetrahydrofolate + NADPH. The enzyme catalyses (6R)-5,10-methenyltetrahydrofolate + H2O = (6R)-10-formyltetrahydrofolate + H(+). Its pathway is one-carbon metabolism; tetrahydrofolate interconversion. Functionally, catalyzes the oxidation of 5,10-methylenetetrahydrofolate to 5,10-methenyltetrahydrofolate and then the hydrolysis of 5,10-methenyltetrahydrofolate to 10-formyltetrahydrofolate. In Limosilactobacillus reuteri (strain DSM 20016) (Lactobacillus reuteri), this protein is Bifunctional protein FolD.